Here is a 560-residue protein sequence, read N- to C-terminus: Oxygen-dependent choline dehydrogenase (560 aa).

An FAD-binding site is contributed by 8-37 (DYIIIGAGSAGNVLATRLTEDADVSVLLLE). The active-site Proton acceptor is H475.

It belongs to the GMC oxidoreductase family. The cofactor is FAD.

It carries out the reaction choline + A = betaine aldehyde + AH2. The catalysed reaction is betaine aldehyde + NAD(+) + H2O = glycine betaine + NADH + 2 H(+). It functions in the pathway amine and polyamine biosynthesis; betaine biosynthesis via choline pathway; betaine aldehyde from choline (cytochrome c reductase route): step 1/1. In terms of biological role, involved in the biosynthesis of the osmoprotectant glycine betaine. Catalyzes the oxidation of choline to betaine aldehyde and betaine aldehyde to glycine betaine at the same rate. This Stenotrophomonas maltophilia (strain R551-3) protein is Oxygen-dependent choline dehydrogenase.